The chain runs to 143 residues: 3-hydroxyacyl-[acyl-carrier-protein] dehydratase FabZ (143 aa).

The active site involves histidine 49.

The protein belongs to the thioester dehydratase family. FabZ subfamily.

It localises to the cytoplasm. It catalyses the reaction a (3R)-hydroxyacyl-[ACP] = a (2E)-enoyl-[ACP] + H2O. Functionally, involved in unsaturated fatty acids biosynthesis. Catalyzes the dehydration of short chain beta-hydroxyacyl-ACPs and long chain saturated and unsaturated beta-hydroxyacyl-ACPs. The chain is 3-hydroxyacyl-[acyl-carrier-protein] dehydratase FabZ from Wolbachia sp. subsp. Drosophila simulans (strain wRi).